The sequence spans 402 residues: Tryptophan synthase beta chain (402 aa).

An N6-(pyridoxal phosphate)lysine modification is found at lysine 92.

Belongs to the TrpB family. Tetramer of two alpha and two beta chains. Requires pyridoxal 5'-phosphate as cofactor.

It catalyses the reaction (1S,2R)-1-C-(indol-3-yl)glycerol 3-phosphate + L-serine = D-glyceraldehyde 3-phosphate + L-tryptophan + H2O. It functions in the pathway amino-acid biosynthesis; L-tryptophan biosynthesis; L-tryptophan from chorismate: step 5/5. Functionally, the beta subunit is responsible for the synthesis of L-tryptophan from indole and L-serine. In Staphylococcus epidermidis (strain ATCC 35984 / DSM 28319 / BCRC 17069 / CCUG 31568 / BM 3577 / RP62A), this protein is Tryptophan synthase beta chain.